We begin with the raw amino-acid sequence, 419 residues long: AT-rich binding protein (419 aa).

The segment at 29-52 (IVCHTCQEELQTQDAFWKHIQDEH) adopts a C2H2-type 1 zinc-finger fold. The tract at residues 121–179 (LHEAQHQQQQQQQQHQQQQQQQQHQQQQQHQHHQHQQQQQHLHQQQQQQQQQQRDAAKE) is disordered. 2 stretches are compositionally biased toward low complexity: residues 126–149 (HQQQQQQQQHQQQQQQQQHQQQQQ) and 156–173 (QQQQQHLHQQQQQQQQQQ). 2 C2H2-type zinc fingers span residues 352–376 (YVCDYGTCGIKFKYKSRMELHRVVH) and 382–405 (FNCDMCSASFKQSCNLSTHRKKKH).

It is found in the nucleus. In terms of biological role, may be a transcription factor for genes having (A+T) stretches in their promoter and/or enhancer regions. Binds to AT rich DNA. This Drosophila grimshawi (Hawaiian fruit fly) protein is AT-rich binding protein.